Consider the following 427-residue polypeptide: 3-phosphoshikimate 1-carboxyvinyltransferase (427 aa).

Residues Lys-20, Ser-21, and Arg-25 each contribute to the 3-phosphoshikimate site. Lys-20 serves as a coordination point for phosphoenolpyruvate. Residues Gly-92 and Arg-120 each coordinate phosphoenolpyruvate. 3-phosphoshikimate contacts are provided by Ser-166, Gln-168, Asp-312, and Lys-339. Residue Gln-168 coordinates phosphoenolpyruvate. Asp-312 (proton acceptor) is an active-site residue. Phosphoenolpyruvate contacts are provided by Arg-343 and Arg-385.

Belongs to the EPSP synthase family. In terms of assembly, monomer.

The protein resides in the cytoplasm. The enzyme catalyses 3-phosphoshikimate + phosphoenolpyruvate = 5-O-(1-carboxyvinyl)-3-phosphoshikimate + phosphate. It functions in the pathway metabolic intermediate biosynthesis; chorismate biosynthesis; chorismate from D-erythrose 4-phosphate and phosphoenolpyruvate: step 6/7. Functionally, catalyzes the transfer of the enolpyruvyl moiety of phosphoenolpyruvate (PEP) to the 5-hydroxyl of shikimate-3-phosphate (S3P) to produce enolpyruvyl shikimate-3-phosphate and inorganic phosphate. This is 3-phosphoshikimate 1-carboxyvinyltransferase from Streptococcus equi subsp. zooepidemicus (strain MGCS10565).